The primary structure comprises 20 residues: DnaJ homolog subfamily C member 1 (20 aa).

The Lumenal segment spans residues 1-20; the sequence is WESGDLELFDLVEEVXLNFY. In terms of domain architecture, J spans 18–20; sequence NFY.

In terms of assembly, interacts (via SANT 2 domain) with SERPINA3; the interaction delays the formation of the covalent inhibitory complex SERPINA3-chymotrypsin, but does not alter the catalytic activity of SERPINA3. Interacts (via SANT 2 domain) with ITIH4 (via C-terminus); the interaction protects ITIH4 against in vitro cleavage by kallikrein. Interacts (via J domain) with HSPA5. Interacts (via cytosolic domain) with ribosomes.

Its subcellular location is the endoplasmic reticulum membrane. The protein localises to the nucleus membrane. It localises to the microsome membrane. The sequence is that of DnaJ homolog subfamily C member 1 (DNAJC1) from Canis lupus familiaris (Dog).